Here is an 89-residue protein sequence, read N- to C-terminus: Small ribosomal subunit protein uS15 (89 aa).

Belongs to the universal ribosomal protein uS15 family. Part of the 30S ribosomal subunit. Forms a bridge to the 50S subunit in the 70S ribosome, contacting the 23S rRNA.

Functionally, one of the primary rRNA binding proteins, it binds directly to 16S rRNA where it helps nucleate assembly of the platform of the 30S subunit by binding and bridging several RNA helices of the 16S rRNA. Forms an intersubunit bridge (bridge B4) with the 23S rRNA of the 50S subunit in the ribosome. The sequence is that of Small ribosomal subunit protein uS15 from Aliivibrio fischeri (strain ATCC 700601 / ES114) (Vibrio fischeri).